Here is a 660-residue protein sequence, read N- to C-terminus: Poly(A)-specific ribonuclease PARN (660 aa).

A divalent metal cation contacts are provided by Asp28 and Glu30. One can recognise an R3H domain in the interval 177 to 243 (REFIRSVEEK…ERFIQISKVD (67 aa)). A divalent metal cation-binding residues include Asp290 and Asp380. 2 positions are modified to phosphoserine: Ser560 and Ser614. The disordered stretch occupies residues 606–660 (ADEGGASVSPVAEEAELDEFSANQSQGKRSRKHKKRKSDASETTPPALFDVPQVW). Over residues 633–642 (KRSRKHKKRK) the composition is skewed to basic residues. Residue Ser643 is modified to Phosphoserine. Position 649 is a phosphothreonine (Thr649).

Belongs to the CAF1 family. A divalent metal cation is required as a cofactor.

It localises to the cytoplasm. The protein resides in the nucleus. The catalysed reaction is Exonucleolytic cleavage of poly(A) to 5'-AMP.. Its function is as follows. 3'-exoribonuclease that has a preference for poly(A) tails of mRNAs, thereby efficiently degrading poly(A) tails. Exonucleolytic degradation of the poly(A) tail is often the first step in the decay of eukaryotic mRNAs and is also used to silence certain maternal mRNAs translationally during oocyte maturation and early embryonic development. The protein is Poly(A)-specific ribonuclease PARN (parn) of Danio rerio (Zebrafish).